We begin with the raw amino-acid sequence, 467 residues long: Proton extrusion protein PxcA (467 aa).

The segment covering 146-161 (SQVRTTSSQPPENPSL) has biased composition (polar residues). 2 disordered regions span residues 146–167 (SQVR…ALRT) and 186–205 (PQLI…KADT). Positions 191–203 (QRTEQSKKSRGKA) are enriched in basic and acidic residues. Helical transmembrane passes span 249–269 (FILL…ALIV), 352–372 (IFSV…IMVL), 391–411 (IIIL…WEVI), and 427–447 (FIFL…KYWI).

Belongs to the CemA family.

Its subcellular location is the cell inner membrane. Required for H(+) efflux immediately after light irradiation to form a rapid H(+) concentration gradient across the thylakoid membranes. Together with PxcL, contributes to transient H(+) uptake following dark to light transition. The polypeptide is Proton extrusion protein PxcA (Nostoc sp. (strain PCC 7120 / SAG 25.82 / UTEX 2576)).